Reading from the N-terminus, the 276-residue chain is NH(3)-dependent NAD(+) synthetase (276 aa).

43-50 (GISGGVDS) contributes to the ATP binding site. Residue aspartate 49 coordinates Mg(2+). Arginine 146 is a deamido-NAD(+) binding site. Position 166 (threonine 166) interacts with ATP. Mg(2+) is bound at residue glutamate 171. Deamido-NAD(+)-binding residues include lysine 179 and aspartate 186. Lysine 195 and threonine 217 together coordinate ATP. 266 to 267 (HK) contacts deamido-NAD(+).

This sequence belongs to the NAD synthetase family. Homodimer.

It carries out the reaction deamido-NAD(+) + NH4(+) + ATP = AMP + diphosphate + NAD(+) + H(+). The protein operates within cofactor biosynthesis; NAD(+) biosynthesis; NAD(+) from deamido-NAD(+) (ammonia route): step 1/1. Catalyzes the ATP-dependent amidation of deamido-NAD to form NAD. Uses ammonia as a nitrogen source. This chain is NH(3)-dependent NAD(+) synthetase, found in Shewanella halifaxensis (strain HAW-EB4).